The chain runs to 342 residues: tRNA N6-adenosine threonylcarbamoyltransferase (342 aa).

Positions 111 and 115 each coordinate Fe cation. Residues 134–138 (LVSGG), Asp167, Gly180, and Asn276 each bind substrate. Residue Asp304 coordinates Fe cation.

The protein belongs to the KAE1 / TsaD family. Fe(2+) serves as cofactor.

It is found in the cytoplasm. The catalysed reaction is L-threonylcarbamoyladenylate + adenosine(37) in tRNA = N(6)-L-threonylcarbamoyladenosine(37) in tRNA + AMP + H(+). Its function is as follows. Required for the formation of a threonylcarbamoyl group on adenosine at position 37 (t(6)A37) in tRNAs that read codons beginning with adenine. Is involved in the transfer of the threonylcarbamoyl moiety of threonylcarbamoyl-AMP (TC-AMP) to the N6 group of A37, together with TsaE and TsaB. TsaD likely plays a direct catalytic role in this reaction. This chain is tRNA N6-adenosine threonylcarbamoyltransferase, found in Helicobacter acinonychis (strain Sheeba).